We begin with the raw amino-acid sequence, 328 residues long: MHTLIERLEKVTNSKELEEARLSALGKKGVFADKFNQLKNLNGEEKNAFAKEIHHYKQAFEKAFELKKKAILELELEERLKKEKIDVSLFNAIKTSSSHPLNHTKNKIIEFFTPLGYKLEIGSLVEDDFHNFSALNLPPYHPARDMQDTFYFKDHKLLRTHTSPVQIHTMQEQTPPIKMICLGETFRRDYDLTHTPMFHQIEGLVVDQKGNIRFTHLKGVIEDFLHYFFGGVKLRWRSSFFPFTEPSAEVDISCVFCKQEGCRVCSHTGWLEVLGCGMVNNAVFEAIGYENVSGFAFGMGIERLAMLTCQINDLRSFFETDLRVLESF.

Mg(2+) is bound at residue Glu245.

It belongs to the class-II aminoacyl-tRNA synthetase family. Phe-tRNA synthetase alpha subunit type 1 subfamily. As to quaternary structure, tetramer of two alpha and two beta subunits. The cofactor is Mg(2+).

It is found in the cytoplasm. It carries out the reaction tRNA(Phe) + L-phenylalanine + ATP = L-phenylalanyl-tRNA(Phe) + AMP + diphosphate + H(+). The protein is Phenylalanine--tRNA ligase alpha subunit of Helicobacter pylori (strain Shi470).